The primary structure comprises 252 residues: 3-deoxy-manno-octulosonate cytidylyltransferase (252 aa).

Belongs to the KdsB family.

The protein resides in the cytoplasm. The catalysed reaction is 3-deoxy-alpha-D-manno-oct-2-ulosonate + CTP = CMP-3-deoxy-beta-D-manno-octulosonate + diphosphate. It functions in the pathway nucleotide-sugar biosynthesis; CMP-3-deoxy-D-manno-octulosonate biosynthesis; CMP-3-deoxy-D-manno-octulosonate from 3-deoxy-D-manno-octulosonate and CTP: step 1/1. Its pathway is bacterial outer membrane biogenesis; lipopolysaccharide biosynthesis. Its function is as follows. Activates KDO (a required 8-carbon sugar) for incorporation into bacterial lipopolysaccharide in Gram-negative bacteria. This is 3-deoxy-manno-octulosonate cytidylyltransferase from Vibrio campbellii (strain ATCC BAA-1116).